An 89-amino-acid chain; its full sequence is Small ribosomal subunit protein uS15 (89 aa).

It belongs to the universal ribosomal protein uS15 family. In terms of assembly, part of the 30S ribosomal subunit. Forms a bridge to the 50S subunit in the 70S ribosome, contacting the 23S rRNA.

Functionally, one of the primary rRNA binding proteins, it binds directly to 16S rRNA where it helps nucleate assembly of the platform of the 30S subunit by binding and bridging several RNA helices of the 16S rRNA. Forms an intersubunit bridge (bridge B4) with the 23S rRNA of the 50S subunit in the ribosome. The protein is Small ribosomal subunit protein uS15 of Methylobacterium nodulans (strain LMG 21967 / CNCM I-2342 / ORS 2060).